We begin with the raw amino-acid sequence, 490 residues long: B3 domain-containing protein REM14 (490 aa).

3 DNA-binding regions (TF-B3) span residues asparagine 3–serine 95, cysteine 130–glycine 226, and cysteine 236–glutamate 333. The tract at residues asparagine 343–arginine 367 is disordered. The segment covering glutamine 352–isoleucine 364 has biased composition (basic and acidic residues). The segment at residues phenylalanine 387–lysine 484 is a DNA-binding region (TF-B3 4).

The protein localises to the nucleus. In Arabidopsis thaliana (Mouse-ear cress), this protein is B3 domain-containing protein REM14 (REM14).